Reading from the N-terminus, the 81-residue chain is Large ribosomal subunit protein bL31B (81 aa).

It belongs to the bacterial ribosomal protein bL31 family. Type B subfamily. In terms of assembly, part of the 50S ribosomal subunit.

This is Large ribosomal subunit protein bL31B from Borrelia garinii subsp. bavariensis (strain ATCC BAA-2496 / DSM 23469 / PBi) (Borreliella bavariensis).